The primary structure comprises 242 residues: Caffeoyl-CoA O-methyltransferase 2 (242 aa).

Position 16 (lysine 16) interacts with substrate. S-adenosyl-L-methionine is bound by residues threonine 58, glutamate 80, 82 to 83 (GV), serine 88, aspartate 106, and alanine 135. Aspartate 158 contributes to the substrate binding site. Position 158 (aspartate 158) interacts with a divalent metal cation. Position 160 (aspartate 160) interacts with S-adenosyl-L-methionine. Positions 184 and 185 each coordinate a divalent metal cation. Asparagine 189 provides a ligand contact to substrate.

The protein belongs to the class I-like SAM-binding methyltransferase superfamily. Cation-dependent O-methyltransferase family. CCoAMT subfamily. A divalent metal cation is required as a cofactor. As to expression, mostly expressed in petal limbs and tubes, and, at low levels, in stems, roots and leaves.

It localises to the cytoplasm. Its subcellular location is the cytosol. The enzyme catalyses (E)-caffeoyl-CoA + S-adenosyl-L-methionine = (E)-feruloyl-CoA + S-adenosyl-L-homocysteine + H(+). It carries out the reaction (E)-5-hydroxyferuloyl-CoA + S-adenosyl-L-methionine = (E)-sinapoyl-CoA + S-adenosyl-L-homocysteine + H(+). It participates in aromatic compound metabolism; phenylpropanoid biosynthesis. Its function is as follows. Involved in the production of floral volatile phenylpropanoids in flowers of fragrant cultivars (e.g. cv. Mitchell and cv. V26) from cinnamic acid, a common precursor with the anthocyanin biosynthesis pathway involved in flower pigmentation. Methylates caffeoyl-CoA to feruloyl-CoA, also able to methylate 5-hydroxyferuloyl-CoA. The protein is Caffeoyl-CoA O-methyltransferase 2 of Petunia hybrida (Petunia).